A 318-amino-acid polypeptide reads, in one-letter code: Cephalosporin-C deacetylase (318 aa).

Tyr91 is a substrate binding site. The active-site Nucleophile is Ser181. Residues Asp269 and His298 each act as charge relay system in the active site.

This sequence belongs to the carbohydrate esterase 7 family. In terms of assembly, homohexamer.

It is found in the cytoplasm. The catalysed reaction is Deacetylation of xylans and xylo-oligosaccharides.. It catalyses the reaction cephalosporin C + H2O = deacetylcephalosporin C + acetate + H(+). In terms of biological role, esterase that removed acetyl groups from a number of O-acetylated small substrates, such as acetylated xylose, short xylooligosaccharides and cephalosporin C. Has no activity towards polymeric acetylated xylan. Cannot cleave amide linkages. The sequence is that of Cephalosporin-C deacetylase (cah) from Bacillus subtilis (strain 168).